The primary structure comprises 374 residues: Methionine import ATP-binding protein MetN 2 (374 aa).

Residues 1–22 are disordered; sequence MSVATLQRKLPEAAPRRAGQTE. Residues 32–271 enclose the ABC transporter domain; the sequence is VRFIGLGKTY…PQHEVSKTLL (240 aa). 68–75 lines the ATP pocket; that stretch reads GRSGAGKS.

The protein belongs to the ABC transporter superfamily. Methionine importer (TC 3.A.1.24) family. The complex is composed of two ATP-binding proteins (MetN), two transmembrane proteins (MetI) and a solute-binding protein (MetQ).

It localises to the cell inner membrane. It carries out the reaction L-methionine(out) + ATP + H2O = L-methionine(in) + ADP + phosphate + H(+). The catalysed reaction is D-methionine(out) + ATP + H2O = D-methionine(in) + ADP + phosphate + H(+). In terms of biological role, part of the ABC transporter complex MetNIQ involved in methionine import. Responsible for energy coupling to the transport system. The protein is Methionine import ATP-binding protein MetN 2 of Pseudomonas fluorescens (strain ATCC BAA-477 / NRRL B-23932 / Pf-5).